Here is a 261-residue protein sequence, read N- to C-terminus: Cytochrome c oxidase subunit 3 (261 aa).

The Mitochondrial matrix portion of the chain corresponds to 1–15 (MTHQTHAYHMVNPSP). The chain crosses the membrane as a helical span at residues 16 to 34 (WPLTGALSALLMTSGLIMW). Over 35–40 (FHFNST) the chain is Mitochondrial intermembrane. Residues 41 to 66 (ALLTLGLTTNMLTMYQWWRDVIREST) form a helical membrane-spanning segment. The Mitochondrial matrix segment spans residues 67-72 (FQGHHT). The chain crosses the membrane as a helical span at residues 73 to 105 (PAVQKGLRYGMILFIISEVLFFTGFFWAFYHSS). Over 106-128 (LAPTPELGGCWPPTGIHPLNPLE) the chain is Mitochondrial intermembrane. The chain crosses the membrane as a helical span at residues 129–152 (VPLLNTSVLLASGVSITWAHHSLM). Residues 153–155 (EGN) are Mitochondrial matrix-facing. The helical transmembrane segment at 156–183 (RYHMLQALFITIALGVYFTLLQASEYYE) threads the bilayer. Over 184–190 (APFTISD) the chain is Mitochondrial intermembrane. The helical transmembrane segment at 191–223 (GVYGSTFFVATGFHGLHVIIGSTFLIVCFFRQL) threads the bilayer. The Mitochondrial matrix portion of the chain corresponds to 224 to 232 (KFHFTSSHH). A helical membrane pass occupies residues 233-256 (FGFEAAAWYWHFVDVVWLFLYMSI). The Mitochondrial intermembrane segment spans residues 257-261 (YWWGS).

This sequence belongs to the cytochrome c oxidase subunit 3 family. In terms of assembly, component of the cytochrome c oxidase (complex IV, CIV), a multisubunit enzyme composed of 14 subunits. The complex is composed of a catalytic core of 3 subunits MT-CO1, MT-CO2 and MT-CO3, encoded in the mitochondrial DNA, and 11 supernumerary subunits COX4I, COX5A, COX5B, COX6A, COX6B, COX6C, COX7A, COX7B, COX7C, COX8 and NDUFA4, which are encoded in the nuclear genome. The complex exists as a monomer or a dimer and forms supercomplexes (SCs) in the inner mitochondrial membrane with NADH-ubiquinone oxidoreductase (complex I, CI) and ubiquinol-cytochrome c oxidoreductase (cytochrome b-c1 complex, complex III, CIII), resulting in different assemblies (supercomplex SCI(1)III(2)IV(1) and megacomplex MCI(2)III(2)IV(2)).

Its subcellular location is the mitochondrion inner membrane. The enzyme catalyses 4 Fe(II)-[cytochrome c] + O2 + 8 H(+)(in) = 4 Fe(III)-[cytochrome c] + 2 H2O + 4 H(+)(out). Functionally, component of the cytochrome c oxidase, the last enzyme in the mitochondrial electron transport chain which drives oxidative phosphorylation. The respiratory chain contains 3 multisubunit complexes succinate dehydrogenase (complex II, CII), ubiquinol-cytochrome c oxidoreductase (cytochrome b-c1 complex, complex III, CIII) and cytochrome c oxidase (complex IV, CIV), that cooperate to transfer electrons derived from NADH and succinate to molecular oxygen, creating an electrochemical gradient over the inner membrane that drives transmembrane transport and the ATP synthase. Cytochrome c oxidase is the component of the respiratory chain that catalyzes the reduction of oxygen to water. Electrons originating from reduced cytochrome c in the intermembrane space (IMS) are transferred via the dinuclear copper A center (CU(A)) of subunit 2 and heme A of subunit 1 to the active site in subunit 1, a binuclear center (BNC) formed by heme A3 and copper B (CU(B)). The BNC reduces molecular oxygen to 2 water molecules using 4 electrons from cytochrome c in the IMS and 4 protons from the mitochondrial matrix. This chain is Cytochrome c oxidase subunit 3 (MT-CO3), found in Ovis aries (Sheep).